A 161-amino-acid chain; its full sequence is Transcription antitermination protein NusB (161 aa).

This sequence belongs to the NusB family.

Involved in transcription antitermination. Required for transcription of ribosomal RNA (rRNA) genes. Binds specifically to the boxA antiterminator sequence of the ribosomal RNA (rrn) operons. In Nitrobacter winogradskyi (strain ATCC 25391 / DSM 10237 / CIP 104748 / NCIMB 11846 / Nb-255), this protein is Transcription antitermination protein NusB.